We begin with the raw amino-acid sequence, 148 residues long: Putative nickel-responsive regulator (148 aa).

Ni(2+) is bound by residues His-77, His-88, His-90, and Cys-96.

Belongs to the transcriptional regulatory CopG/NikR family. Ni(2+) is required as a cofactor.

Its function is as follows. Transcriptional regulator. The chain is Putative nickel-responsive regulator from Bradyrhizobium diazoefficiens (strain JCM 10833 / BCRC 13528 / IAM 13628 / NBRC 14792 / USDA 110).